Consider the following 607-residue polypeptide: Chaperone protein HtpG (607 aa).

Residues 1 to 323 (MKKEEKIFKA…CDSLSLNISR (323 aa)) are a; substrate-binding. The segment at 324–534 (EILQQNAELQ…KGGLSLEMEK (211 aa)) is b. Positions 535–607 (TLSEMTNNND…FIKNLNSLIK (73 aa)) are c.

Belongs to the heat shock protein 90 family. In terms of assembly, homodimer.

It localises to the cytoplasm. Its function is as follows. Molecular chaperone. Has ATPase activity. The sequence is that of Chaperone protein HtpG from Fusobacterium nucleatum subsp. nucleatum (strain ATCC 25586 / DSM 15643 / BCRC 10681 / CIP 101130 / JCM 8532 / KCTC 2640 / LMG 13131 / VPI 4355).